We begin with the raw amino-acid sequence, 271 residues long: Shikimate dehydrogenase (NADP(+)) (271 aa).

Shikimate contacts are provided by residues 14-16 and T61; that span reads SLS. K65 functions as the Proton acceptor in the catalytic mechanism. The shikimate site is built by N86 and D101. Residues 125–129 and I212 contribute to the NADP(+) site; that span reads GAGGA. Y214 is a shikimate binding site. An NADP(+)-binding site is contributed by G235.

This sequence belongs to the shikimate dehydrogenase family. Homodimer.

The catalysed reaction is shikimate + NADP(+) = 3-dehydroshikimate + NADPH + H(+). It participates in metabolic intermediate biosynthesis; chorismate biosynthesis; chorismate from D-erythrose 4-phosphate and phosphoenolpyruvate: step 4/7. Functionally, involved in the biosynthesis of the chorismate, which leads to the biosynthesis of aromatic amino acids. Catalyzes the reversible NADPH linked reduction of 3-dehydroshikimate (DHSA) to yield shikimate (SA). The protein is Shikimate dehydrogenase (NADP(+)) of Clostridium perfringens (strain ATCC 13124 / DSM 756 / JCM 1290 / NCIMB 6125 / NCTC 8237 / Type A).